We begin with the raw amino-acid sequence, 388 residues long: Na(+)/H(+) antiporter NhaA (388 aa).

The Cytoplasmic segment spans residues 1 to 11 (MKHLHRFFSSD). A helical membrane pass occupies residues 12-31 (ASGGIILIIAAILAMIMANS). Topologically, residues 32–58 (GATSGWYHDFLETPVQLRVGSLEINKN) are periplasmic. Residues 59-80 (MLLWINDALMAVFFLLVGLEVK) traverse the membrane as a helical segment. The Cytoplasmic segment spans residues 81–96 (RELMQGSLASLRQAAF). Residues 97-116 (PVIAAIGGMIVPALLYLAFN) form a helical membrane-spanning segment. The Periplasmic segment spans residues 117 to 122 (YADPIT). Residues 123 to 130 (REGWAIPA) traverse the membrane as a helical segment. Topologically, residues 131-154 (ATDIAFALGVLALLGSRVPLALKI) are cytoplasmic. The chain crosses the membrane as a helical span at residues 155-176 (FLMALAIIDDLGAIIIIALFYT). At 177 to 180 (NDLS) the chain is on the periplasmic side. Residues 181-200 (MASLGVAAVAIAVLAVLNLC) traverse the membrane as a helical segment. Over 201-204 (GVRR) the chain is Cytoplasmic. A helical transmembrane segment spans residues 205–222 (TGVYILVGVVLWTAVLKS). A topological domain (periplasmic) is located at residue G223. The chain crosses the membrane as a helical span at residues 224 to 236 (VHATLAGVIVGFF). The Cytoplasmic segment spans residues 237-253 (IPLKEKHGRSPAKRLEH). The chain crosses the membrane as a helical span at residues 254 to 272 (VLHPWVAYLILPLFAFANA). Topologically, residues 273-286 (GVSLQGVTLDGLTS) are periplasmic. Residues 287–310 (ILPLGIIAGLLIGKPLGISLFCWL) traverse the membrane as a helical segment. Residues 311–339 (ALRLKLAHLPEGTTYQQIMAVGILCGIGF) are Cytoplasmic-facing. Residues 340 to 350 (TMSIFIASLAF) form a helical membrane-spanning segment. The Periplasmic portion of the chain corresponds to 351 to 357 (GSVDPEL). Residues 358 to 380 (INWAKLGILVGSISSAVIGYSWL) traverse the membrane as a helical segment. At 381–388 (RVRLRPSV) the chain is on the cytoplasmic side.

Belongs to the NhaA Na(+)/H(+) (TC 2.A.33) antiporter family.

The protein localises to the cell inner membrane. The enzyme catalyses Na(+)(in) + 2 H(+)(out) = Na(+)(out) + 2 H(+)(in). Functionally, na(+)/H(+) antiporter that extrudes sodium in exchange for external protons. This Escherichia coli O9:H4 (strain HS) protein is Na(+)/H(+) antiporter NhaA.